Reading from the N-terminus, the 121-residue chain is Small ribosomal subunit protein uS13 (121 aa).

Residues 92–121 (RKGLPVRGQRTKTNARTRKGPRKSGVQLKK) are disordered.

It belongs to the universal ribosomal protein uS13 family. Part of the 30S ribosomal subunit. Forms a loose heterodimer with protein S19. Forms two bridges to the 50S subunit in the 70S ribosome.

Functionally, located at the top of the head of the 30S subunit, it contacts several helices of the 16S rRNA. In the 70S ribosome it contacts the 23S rRNA (bridge B1a) and protein L5 of the 50S subunit (bridge B1b), connecting the 2 subunits; these bridges are implicated in subunit movement. Contacts the tRNAs in the A and P-sites. This is Small ribosomal subunit protein uS13 from Polynucleobacter asymbioticus (strain DSM 18221 / CIP 109841 / QLW-P1DMWA-1) (Polynucleobacter necessarius subsp. asymbioticus).